Reading from the N-terminus, the 316-residue chain is 4-hydroxyphenylacetate decarboxylase activating enzyme (316 aa).

The region spanning 20 to 307 is the Radical SAM core domain; it reads HDGPGCRTTV…QDIFLDNGIA (288 aa). [4Fe-4S] cluster-binding residues include cysteine 34, cysteine 38, cysteine 41, cysteine 60, cysteine 66, cysteine 69, and cysteine 105. Residue 40–42 coordinates S-adenosyl-L-methionine; that stretch reads WCA. A 4Fe-4S ferredoxin-type domain is found at 84–115; the sequence is NKPVIDWNICKDCESFECVNSCYYNAFKLCAK. S-adenosyl-L-methionine is bound by residues glycine 144, 193–195, and histidine 267; that span reads DIK.

Belongs to the organic radical-activating enzymes family. In terms of assembly, monomer. [4Fe-4S] cluster serves as cofactor.

The catalysed reaction is glycyl-[protein] + reduced [flavodoxin] + S-adenosyl-L-methionine = glycin-2-yl radical-[protein] + semiquinone [flavodoxin] + 5'-deoxyadenosine + L-methionine + H(+). Functionally, catalyzes activation of 4-hydroxyphenylacetate decarboxylase under anaerobic conditions by generation of an organic free radical on a glycine residue, via a homolytic cleavage of S-adenosyl-L-methionine (SAM). The protein is 4-hydroxyphenylacetate decarboxylase activating enzyme of Clostridioides difficile (strain 630) (Peptoclostridium difficile).